A 524-amino-acid polypeptide reads, in one-letter code: Chromosomal replication initiator protein DnaA (524 aa).

Residues 1–73 (MELPESAWEQ…DELLSSADHH (73 aa)) are domain I, interacts with DnaA modulators. A domain II region spans residues 73 to 187 (HPITSVEISV…DVEGGLQHKS (115 aa)). 3 stretches are compositionally biased toward polar residues: residues 86-95 (RSTSFETNQG), 106-126 (APRQ…QPQQ), and 153-165 (NGYN…QPYN). The tract at residues 86-173 (RSTSFETNQG…YNDNPMGQGK (88 aa)) is disordered. The tract at residues 188–404 (NLNPTFIFDN…GALKRVIANA (217 aa)) is domain III, AAA+ region. 4 residues coordinate ATP: Gly-232, Gly-234, Lys-235, and Thr-236. Positions 405–524 (HFTGRDISVE…VKNLLRTLTT (120 aa)) are domain IV, binds dsDNA.

It belongs to the DnaA family. In terms of assembly, oligomerizes as a right-handed, spiral filament on DNA at oriC.

It is found in the cytoplasm. Functionally, plays an essential role in the initiation and regulation of chromosomal replication. ATP-DnaA binds to the origin of replication (oriC) to initiate formation of the DNA replication initiation complex once per cell cycle. Binds the DnaA box (a 9 base pair repeat at the origin) and separates the double-stranded (ds)DNA. Forms a right-handed helical filament on oriC DNA; dsDNA binds to the exterior of the filament while single-stranded (ss)DNA is stabiized in the filament's interior. The ATP-DnaA-oriC complex binds and stabilizes one strand of the AT-rich DNA unwinding element (DUE), permitting loading of DNA polymerase. After initiation quickly degrades to an ADP-DnaA complex that is not apt for DNA replication. Binds acidic phospholipids. The polypeptide is Chromosomal replication initiator protein DnaA (Saccharophagus degradans (strain 2-40 / ATCC 43961 / DSM 17024)).